Consider the following 274-residue polypeptide: Probable formate transporter (274 aa).

7 helical membrane-spanning segments follow: residues 31–51 (IVLS…AEVV), 62–82 (AGLV…LVVI), 118–138 (VFNL…TGIL), 176–196 (AFWR…LAIA), 200–220 (IIGK…IGFE), 226–246 (MFFI…FFMN), and 248–268 (LIPV…CLYW).

Belongs to the FNT transporter (TC 1.A.16) family.

The protein localises to the cell membrane. In terms of biological role, may act as a formate transporter. This chain is Probable formate transporter (fdhC), found in Methanothermobacter thermautotrophicus (Methanobacterium thermoformicicum).